The chain runs to 189 residues: GTP cyclohydrolase 1 (189 aa).

3 residues coordinate Zn(2+): C76, H79, and C149.

Belongs to the GTP cyclohydrolase I family. In terms of assembly, toroid-shaped homodecamer, composed of two pentamers of five dimers.

The enzyme catalyses GTP + H2O = 7,8-dihydroneopterin 3'-triphosphate + formate + H(+). It functions in the pathway cofactor biosynthesis; 7,8-dihydroneopterin triphosphate biosynthesis; 7,8-dihydroneopterin triphosphate from GTP: step 1/1. In Dehalococcoides mccartyi (strain ATCC BAA-2266 / KCTC 15142 / 195) (Dehalococcoides ethenogenes (strain 195)), this protein is GTP cyclohydrolase 1.